The following is a 297-amino-acid chain: Ribosomal RNA small subunit methyltransferase A (297 aa).

The S-adenosyl-L-methionine site is built by N31, L33, G58, E79, D104, and N129.

This sequence belongs to the class I-like SAM-binding methyltransferase superfamily. rRNA adenine N(6)-methyltransferase family. RsmA subfamily.

It is found in the cytoplasm. It carries out the reaction adenosine(1518)/adenosine(1519) in 16S rRNA + 4 S-adenosyl-L-methionine = N(6)-dimethyladenosine(1518)/N(6)-dimethyladenosine(1519) in 16S rRNA + 4 S-adenosyl-L-homocysteine + 4 H(+). Specifically dimethylates two adjacent adenosines (A1518 and A1519) in the loop of a conserved hairpin near the 3'-end of 16S rRNA in the 30S particle. May play a critical role in biogenesis of 30S subunits. This Staphylococcus aureus (strain Newman) protein is Ribosomal RNA small subunit methyltransferase A.